The following is a 308-amino-acid chain: Transaldolase (308 aa).

The Schiff-base intermediate with substrate role is filled by Lys125.

Belongs to the transaldolase family. Type 1 subfamily. As to quaternary structure, homodimer.

It localises to the cytoplasm. The catalysed reaction is D-sedoheptulose 7-phosphate + D-glyceraldehyde 3-phosphate = D-erythrose 4-phosphate + beta-D-fructose 6-phosphate. The protein operates within carbohydrate degradation; pentose phosphate pathway; D-glyceraldehyde 3-phosphate and beta-D-fructose 6-phosphate from D-ribose 5-phosphate and D-xylulose 5-phosphate (non-oxidative stage): step 2/3. Its function is as follows. Transaldolase is important for the balance of metabolites in the pentose-phosphate pathway. This chain is Transaldolase, found in Pseudomonas putida (strain GB-1).